A 274-amino-acid polypeptide reads, in one-letter code: Envelope glycoprotein L (274 aa).

Residues 1 to 21 (MMPLLLLILLSTRNLLGAAQS) form the signal peptide. Residues 51 to 251 (VEHKCREALA…RSYRDRFPAV (201 aa)) form the gL betaherpesvirus-type domain. Cysteines 156 and 161 form a disulfide.

The protein belongs to the herpesviridae glycoprotein L (gL) family. Betaherpesvirinae gL subfamily. In terms of assembly, interacts with glycoprotein H (gH); this interaction is necessary for the correct processing and cell surface expression of gH.

The protein resides in the virion membrane. It localises to the host cell membrane. It is found in the host Golgi apparatus. The protein localises to the host trans-Golgi network. Functionally, the heterodimer glycoprotein H-glycoprotein L is required for the fusion of viral and plasma membranes leading to virus entry into the host cell. Acts as a functional inhibitor of gH and maintains gH in an inhibited form. Upon binding to host integrins, gL dissociates from gH leading to activation of the viral fusion glycoproteins gB and gH. The sequence is that of Envelope glycoprotein L from Mus musculus (Mouse).